Consider the following 148-residue polypeptide: Snaclec B3/B5 (148 aa).

The signal sequence occupies residues 1 to 24 (MGRFIFVSFGLLVVFLSLSGTGAA). 3 cysteine pairs are disulfide-bonded: Cys-27/Cys-38, Cys-55/Cys-144, and Cys-121/Cys-136. One can recognise a C-type lectin domain in the interval 34-145 (YDQHCYKVFD…CRLLGHFVCK (112 aa)).

This sequence belongs to the snaclec family. As to quaternary structure, heterodimer; disulfide-linked. Expressed by the venom gland.

The protein resides in the secreted. Interferes with one step of hemostasis (modulation of platelet aggregation, or coagulation cascade, for example). The chain is Snaclec B3/B5 from Macrovipera lebetinus (Levantine viper).